Consider the following 156-residue polypeptide: Small ribosomal subunit protein uS7 (156 aa).

It belongs to the universal ribosomal protein uS7 family. Part of the 30S ribosomal subunit. Contacts proteins S9 and S11.

One of the primary rRNA binding proteins, it binds directly to 16S rRNA where it nucleates assembly of the head domain of the 30S subunit. Is located at the subunit interface close to the decoding center, probably blocks exit of the E-site tRNA. The polypeptide is Small ribosomal subunit protein uS7 (Salinispora arenicola (strain CNS-205)).